Reading from the N-terminus, the 494-residue chain is Ribose import ATP-binding protein RbsA (494 aa).

ABC transporter domains are found at residues I3–S240 and S250–E494. G35–S42 contributes to the ATP binding site.

It belongs to the ABC transporter superfamily. Ribose importer (TC 3.A.1.2.1) family. The complex is composed of an ATP-binding protein (RbsA), two transmembrane proteins (RbsC) and a solute-binding protein (RbsB).

It is found in the cell membrane. It carries out the reaction D-ribose(out) + ATP + H2O = D-ribose(in) + ADP + phosphate + H(+). Part of the ABC transporter complex RbsABC involved in ribose import. Responsible for energy coupling to the transport system. In Bacillus cereus (strain ZK / E33L), this protein is Ribose import ATP-binding protein RbsA.